The primary structure comprises 785 residues: Endonuclease MutS2 (785 aa).

Gly335 to Thr342 lines the ATP pocket. The Smr domain occupies Leu710 to Lys785.

Belongs to the DNA mismatch repair MutS family. MutS2 subfamily. As to quaternary structure, homodimer. Binds to stalled ribosomes, contacting rRNA.

In terms of biological role, endonuclease that is involved in the suppression of homologous recombination and thus may have a key role in the control of bacterial genetic diversity. Acts as a ribosome collision sensor, splitting the ribosome into its 2 subunits. Detects stalled/collided 70S ribosomes which it binds and splits by an ATP-hydrolysis driven conformational change. Acts upstream of the ribosome quality control system (RQC), a ribosome-associated complex that mediates the extraction of incompletely synthesized nascent chains from stalled ribosomes and their subsequent degradation. Probably generates substrates for RQC. In Listeria monocytogenes serotype 4b (strain F2365), this protein is Endonuclease MutS2.